A 98-amino-acid polypeptide reads, in one-letter code: Tax1-binding protein 3 (98 aa).

Position 2 is an N-acetylserine (serine 2). The PDZ domain occupies 12 to 87 (VVQRVEIHKL…VVRLLVTRQS (76 aa)).

As to quaternary structure, interacts (via its PDZ domain) with GLS2. Interacts (via its PDZ domain) with RTKN (via the C-terminal region); this interaction facilitates Rho-mediated activation of the FOS serum response element (SRE). Interacts (via PDZ domain) with ARHGEF16. Interacts (via PDZ domain) with KCNJ4 (via C-terminus). Competes with LIN7A for KCNJ4 binding. Interacts (via its PDZ domain) with CTNNB1; this interaction inhibits the transcriptional activity of CTNNB1. Interacts with ADGRB2. In terms of tissue distribution, detected in kidney distal convoluted tubules (at protein level).

Its subcellular location is the cytoplasm. The protein resides in the nucleus. The protein localises to the cell membrane. Functionally, may regulate a number of protein-protein interactions by competing for PDZ domain binding sites. Binds CTNNB1 and may thereby act as an inhibitor of the Wnt signaling pathway. Competes with LIN7A for KCNJ4 binding, and thereby promotes KCNJ4 internalization. May play a role in the Rho signaling pathway. The sequence is that of Tax1-binding protein 3 from Rattus norvegicus (Rat).